The sequence spans 105 residues: Large ribosomal subunit protein uL24 (105 aa).

Belongs to the universal ribosomal protein uL24 family. In terms of assembly, part of the 50S ribosomal subunit.

In terms of biological role, one of two assembly initiator proteins, it binds directly to the 5'-end of the 23S rRNA, where it nucleates assembly of the 50S subunit. One of the proteins that surrounds the polypeptide exit tunnel on the outside of the subunit. The protein is Large ribosomal subunit protein uL24 of Francisella philomiragia subsp. philomiragia (strain ATCC 25017 / CCUG 19701 / FSC 153 / O#319-036).